The sequence spans 147 residues: Cytochrome c-type biogenesis protein CcmE 1 (147 aa).

Residues 1 to 9 are Cytoplasmic-facing; sequence MKSLKKQRR. A helical; Signal-anchor for type II membrane protein transmembrane segment spans residues 10–30; that stretch reads IQVIILATVALVLATGLIGYA. The Periplasmic segment spans residues 31-147; sequence MRDGINFFRA…EQGVYQAPES (117 aa). Heme-binding residues include His-123 and Tyr-127.

The protein belongs to the CcmE/CycJ family.

Its subcellular location is the cell inner membrane. Heme chaperone required for the biogenesis of c-type cytochromes. Transiently binds heme delivered by CcmC and transfers the heme to apo-cytochromes in a process facilitated by CcmF and CcmH. This chain is Cytochrome c-type biogenesis protein CcmE 1, found in Ruegeria pomeroyi (strain ATCC 700808 / DSM 15171 / DSS-3) (Silicibacter pomeroyi).